A 99-amino-acid chain; its full sequence is NADH-quinone oxidoreductase subunit K (99 aa).

3 consecutive transmembrane segments (helical) span residues 3–23, 28–48, and 62–82; these read PANY…GVLV, IVVF…LVTF, and FFVM…ILAI.

The protein belongs to the complex I subunit 4L family. In terms of assembly, NDH-1 is composed of 14 different subunits. Subunits NuoA, H, J, K, L, M, N constitute the membrane sector of the complex.

It is found in the cell membrane. The catalysed reaction is a quinone + NADH + 5 H(+)(in) = a quinol + NAD(+) + 4 H(+)(out). Its function is as follows. NDH-1 shuttles electrons from NADH, via FMN and iron-sulfur (Fe-S) centers, to quinones in the respiratory chain. The immediate electron acceptor for the enzyme in this species is believed to be a menaquinone. Couples the redox reaction to proton translocation (for every two electrons transferred, four hydrogen ions are translocated across the cytoplasmic membrane), and thus conserves the redox energy in a proton gradient. In Parafrankia sp. (strain EAN1pec), this protein is NADH-quinone oxidoreductase subunit K.